Consider the following 485-residue polypeptide: N-succinylglutamate 5-semialdehyde dehydrogenase (485 aa).

An NAD(+)-binding site is contributed by 220–225 (GSANTG). Catalysis depends on residues Glu243 and Cys278.

This sequence belongs to the aldehyde dehydrogenase family. AstD subfamily.

The enzyme catalyses N-succinyl-L-glutamate 5-semialdehyde + NAD(+) + H2O = N-succinyl-L-glutamate + NADH + 2 H(+). The protein operates within amino-acid degradation; L-arginine degradation via AST pathway; L-glutamate and succinate from L-arginine: step 4/5. Functionally, catalyzes the NAD-dependent reduction of succinylglutamate semialdehyde into succinylglutamate. This is N-succinylglutamate 5-semialdehyde dehydrogenase from Vibrio campbellii (strain ATCC BAA-1116).